A 591-amino-acid polypeptide reads, in one-letter code: MMRSHYCGQLNESLEGQEITLCGWVHRRRDHGGVIFLDIRDRDGLAQVVFDPDRAESFAAADRVRSEYVVKITGKVRLRPAGATNANMASGMIEVLGYELEVLNESETPPFPLNEFSDVGEETRLRYRFLDLRRPEMAEKLRLRSRMTTSIRRYLDENGFLDVETPILTRATPEGARDYLVPSRTHAGSFFALPQSPQLFKQLLMVAGFDRYYQIAKCFRDEDLRADRQPEFTQIDIETSFLDEKDIMGLTEGMIRNLFKEVLDLEFGEFPHMTFEEAMRRYGSDKPDLRNPLELVDVADQLKEVDFKVFSGPANDPKCRIAALRVPGGASMPRKQIDDYTKFVGIYGAKGLAYIKVNERAAGVEGLQSPIVKNIPEANLNVILDRVGAVDGDIVFFGADKAKIVSEALGALRIKLGHDLKLLTCEWAPMWVVDFPMFEENDDGSFSALHHPFTAPKCSPEELEANPAGALSRAYDMVLNGTELGGGSIRIHRKEMQQAVFRLLGINEAEQEEKFGFLLDALKYGAPPHGGLAFGLDRLVMLMTGAQSIREVIAFPKTQSAADVMTQAPGVVDAKALRELHIRLRETPKAE.

E174 is a binding site for L-aspartate. An aspartate region spans residues 198-201 (QLFK). R220 is a binding site for L-aspartate. ATP contacts are provided by residues 220 to 222 (RDE) and Q229. H450 provides a ligand contact to L-aspartate. Residue E483 coordinates ATP. R490 lines the L-aspartate pocket. 535–538 (GLDR) is an ATP binding site.

The protein belongs to the class-II aminoacyl-tRNA synthetase family. Type 1 subfamily. As to quaternary structure, homodimer.

It is found in the cytoplasm. It catalyses the reaction tRNA(Asx) + L-aspartate + ATP = L-aspartyl-tRNA(Asx) + AMP + diphosphate. Its function is as follows. Aspartyl-tRNA synthetase with relaxed tRNA specificity since it is able to aspartylate not only its cognate tRNA(Asp) but also tRNA(Asn). Reaction proceeds in two steps: L-aspartate is first activated by ATP to form Asp-AMP and then transferred to the acceptor end of tRNA(Asp/Asn). In Pseudomonas fluorescens (strain Pf0-1), this protein is Aspartate--tRNA(Asp/Asn) ligase.